We begin with the raw amino-acid sequence, 259 residues long: Hydroxyacylglutathione hydrolase (259 aa).

Zn(2+) contacts are provided by histidine 56, histidine 58, aspartate 60, histidine 61, histidine 112, aspartate 133, and histidine 171.

It belongs to the metallo-beta-lactamase superfamily. Glyoxalase II family. Monomer. It depends on Zn(2+) as a cofactor.

It catalyses the reaction an S-(2-hydroxyacyl)glutathione + H2O = a 2-hydroxy carboxylate + glutathione + H(+). The protein operates within secondary metabolite metabolism; methylglyoxal degradation; (R)-lactate from methylglyoxal: step 2/2. Thiolesterase that catalyzes the hydrolysis of S-D-lactoyl-glutathione to form glutathione and D-lactic acid. This Pseudomonas putida (strain ATCC 47054 / DSM 6125 / CFBP 8728 / NCIMB 11950 / KT2440) protein is Hydroxyacylglutathione hydrolase.